The chain runs to 130 residues: Large ribosomal subunit protein bL17 (130 aa).

The protein belongs to the bacterial ribosomal protein bL17 family. Part of the 50S ribosomal subunit. Contacts protein L32.

The polypeptide is Large ribosomal subunit protein bL17 (Buchnera aphidicola subsp. Acyrthosiphon pisum (strain 5A)).